We begin with the raw amino-acid sequence, 417 residues long: UPF0761 membrane protein CV_0810 (417 aa).

7 consecutive transmembrane segments (helical) span residues 52 to 72 (LLAL…FPVF), 79 to 99 (FKIM…ITVY), 110 to 130 (LTAA…STIE), 150 to 170 (MVYW…LLSW), 185 to 205 (LLAS…VLAL), 214 to 234 (FVPF…LELT), and 258 to 278 (IPIF…GAVF).

Belongs to the UPF0761 family.

It is found in the cell inner membrane. The chain is UPF0761 membrane protein CV_0810 from Chromobacterium violaceum (strain ATCC 12472 / DSM 30191 / JCM 1249 / CCUG 213 / NBRC 12614 / NCIMB 9131 / NCTC 9757 / MK).